The sequence spans 1001 residues: Serine/threonine-protein kinase TAO1-A (1001 aa).

The region spanning 28–281 (FSDLREIGHG…SDELLKNMFV (254 aa)) is the Protein kinase domain. ATP contacts are provided by residues 34-42 (IGHGSFGAV) and K57. The active-site Proton acceptor is the D151. 2 disordered regions span residues 324–431 (PAVE…HKSH) and 567–586 (KEELNENQSTPKKEKQEWLS). Low complexity predominate over residues 350–370 (SNQSIPSMSISASSQSSSVTS). Basic and acidic residues-rich tracts occupy residues 375–388 (SDDKSELDMMEGDH) and 577–586 (PKKEKQEWLS). Coiled coils occupy residues 458–651 (SELR…EHAM) and 754–877 (KAVL…EIEA). Residues 911–1001 (SHNPTGGPGP…ISNGSRMSYT (91 aa)) form a disordered region. The segment covering 921–930 (HWGHPMAGPP) has biased composition (low complexity). 2 stretches are compositionally biased toward polar residues: residues 949-967 (GSVQGVSRGSTMGVRNSPQ) and 974-1001 (SGGQTEQGMSRSTSVTSQISNGSRMSYT).

This sequence belongs to the protein kinase superfamily. STE Ser/Thr protein kinase family. STE20 subfamily.

Its subcellular location is the cytoplasm. The enzyme catalyses L-seryl-[protein] + ATP = O-phospho-L-seryl-[protein] + ADP + H(+). The catalysed reaction is L-threonyl-[protein] + ATP = O-phospho-L-threonyl-[protein] + ADP + H(+). In terms of biological role, serine/threonine-protein kinase involved in various processes such as p38/mapk14 stress-activated MAPK cascade, DNA damage response and regulation of cytoskeleton stability. Acts as an activator of the p38/MAPK14 stress-activated MAPK cascade by mediating phosphorylation and subsequent activation of upstream MAP kinase kinases. In response to DNA damage, involved in the G2/M transition DNA damage checkpoint by activating the p38/MAPK14 stress-activated MAPK cascade. This Xenopus laevis (African clawed frog) protein is Serine/threonine-protein kinase TAO1-A (taok1-a).